A 397-amino-acid chain; its full sequence is MATMEELKLQIETLQSELCKLKATSAGGAREKIEKMSSEVVDSNPYSRLMALQRMGIVSEYERIRQKSVAVVGVGGVGSVTADMLTRCGIGKLILFDYDKVELANMNRLFFTPDQAGLSKVEAAAKTLNFINPDVKILTNNYNITTVESFDKFLNAIKTGGIEEGTPVDLVLSCVDNFEARMAINTACNELSLNWFESGVSENAVSGHIQFIRPGDTACFACAPPLVVAENIDEKTLKREGVCAASLPTTMGIVAGMLVQNTLKYLLNFGTVSDYLGYNALIDFFPKMSLKPNPTCDDRFCIDRQKDYAARPKEERVEEVPEEETPLHEENLYGIELVAEDDTQGSQPSTGTTHSISTGLKLAYEPPASTKHSETTSTTAVSDDVSLDELMAQMKSM.

ATP is bound by residues Gly-76, Asp-97, Lys-120, Asn-143, and Asn-177. Zn(2+) contacts are provided by Cys-219 and Cys-222. Catalysis depends on Cys-243, which acts as the Glycyl thioester intermediate. Zn(2+) is bound by residues Cys-296 and Cys-301. Positions 362–384 are disordered; sequence LAYEPPASTKHSETTSTTAVSDD. Low complexity predominate over residues 375-384; it reads TTSTTAVSDD.

Belongs to the ubiquitin-activating E1 family. UBA5 subfamily.

Its function is as follows. E1-like enzyme which activates UFM1. The protein is Ubiquitin-like modifier-activating enzyme 5 of Aedes aegypti (Yellowfever mosquito).